Consider the following 314-residue polypeptide: Homoserine O-succinyltransferase (314 aa).

The Acyl-thioester intermediate role is filled by Cys142. The substrate site is built by Lys163 and Ser192. The active-site Proton acceptor is His235. Glu237 is an active-site residue. Arg249 serves as a coordination point for substrate.

It belongs to the MetA family.

The protein localises to the cytoplasm. The catalysed reaction is L-homoserine + succinyl-CoA = O-succinyl-L-homoserine + CoA. It participates in amino-acid biosynthesis; L-methionine biosynthesis via de novo pathway; O-succinyl-L-homoserine from L-homoserine: step 1/1. Transfers a succinyl group from succinyl-CoA to L-homoserine, forming succinyl-L-homoserine. The protein is Homoserine O-succinyltransferase of Aeromonas salmonicida (strain A449).